The sequence spans 345 residues: Large ribosomal subunit protein uL4 (345 aa).

A2 carries the N-acetylalanine modification.

The protein belongs to the universal ribosomal protein uL4 family.

The polypeptide is Large ribosomal subunit protein uL4 (rpl-4) (Caenorhabditis elegans).